The chain runs to 215 residues: UPF0502 protein YceH (215 aa).

This sequence belongs to the UPF0502 family.

The chain is UPF0502 protein YceH from Salmonella schwarzengrund (strain CVM19633).